Here is a 129-residue protein sequence, read N- to C-terminus: Small ribosomal subunit protein uS11 (129 aa).

This sequence belongs to the universal ribosomal protein uS11 family. In terms of assembly, part of the 30S ribosomal subunit. Interacts with proteins S7 and S18. Binds to IF-3.

Located on the platform of the 30S subunit, it bridges several disparate RNA helices of the 16S rRNA. Forms part of the Shine-Dalgarno cleft in the 70S ribosome. In Cereibacter sphaeroides (strain ATCC 17029 / ATH 2.4.9) (Rhodobacter sphaeroides), this protein is Small ribosomal subunit protein uS11.